Reading from the N-terminus, the 246-residue chain is Proteasome subunit alpha type-6 (246 aa).

The protein belongs to the peptidase T1A family. The 26S proteasome consists of a 20S proteasome core and two 19S regulatory subunits. The 20S proteasome core is composed of 28 subunits that are arranged in four stacked rings, resulting in a barrel-shaped structure. The two end rings are each formed by seven alpha subunits, and the two central rings are each formed by seven beta subunits. The catalytic chamber with the active sites is on the inside of the barrel.

It localises to the cytoplasm. Its subcellular location is the nucleus. The proteasome is a multicatalytic proteinase complex which is characterized by its ability to cleave peptides with Arg, Phe, Tyr, Leu, and Glu adjacent to the leaving group at neutral or slightly basic pH. The proteasome has an ATP-dependent proteolytic activity. The sequence is that of Proteasome subunit alpha type-6 (PAA1) from Oryza sativa subsp. japonica (Rice).